Here is a 632-residue protein sequence, read N- to C-terminus: Asparagine synthetase [glutamine-hydrolyzing] 1 (632 aa).

The For GATase activity role is filled by cysteine 2. The Glutamine amidotransferase type-2 domain occupies 2 to 214 (CGFVGVFNKH…PGSQFTIRPD (213 aa)). L-glutamine is bound by residues 52 to 56 (RLSII), 77 to 79 (NGE), and aspartate 102. Residues valine 288 and 361–362 (SG) contribute to the ATP site.

This sequence belongs to the asparagine synthetase family.

The catalysed reaction is L-aspartate + L-glutamine + ATP + H2O = L-asparagine + L-glutamate + AMP + diphosphate + H(+). It functions in the pathway amino-acid biosynthesis; L-asparagine biosynthesis; L-asparagine from L-aspartate (L-Gln route): step 1/1. Main asparagine synthetase in vegetative cells. The polypeptide is Asparagine synthetase [glutamine-hydrolyzing] 1 (asnB) (Bacillus subtilis (strain 168)).